An 86-amino-acid polypeptide reads, in one-letter code: RNA-binding protein Hfq (86 aa).

The region spanning 9–68 (DPYLNTLRKEKVPVSIYLVNGIKLQGQIESFDQFVVLLKNTVSQMVYKHAISTVVPARPV) is the Sm domain. The disordered stretch occupies residues 66-86 (RPVRLPSPSDAEHGDSEPGNA). The span at 75–86 (DAEHGDSEPGNA) shows a compositional bias: basic and acidic residues.

This sequence belongs to the Hfq family. As to quaternary structure, homohexamer.

In terms of biological role, RNA chaperone that binds small regulatory RNA (sRNAs) and mRNAs to facilitate mRNA translational regulation in response to envelope stress, environmental stress and changes in metabolite concentrations. Also binds with high specificity to tRNAs. The chain is RNA-binding protein Hfq from Pseudomonas entomophila (strain L48).